Here is a 486-residue protein sequence, read N- to C-terminus: Cardiolipin synthase A (486 aa).

2 helical membrane passes run 3–23 (TFYT…IAGV) and 38–58 (MAWL…YLSF). 2 consecutive PLD phosphodiesterase domains span residues 219–246 (MDLR…VDPR) and 399–426 (EGGL…DMRS). Catalysis depends on residues histidine 224, lysine 226, aspartate 231, histidine 404, lysine 406, and aspartate 411.

Belongs to the phospholipase D family. Cardiolipin synthase subfamily. ClsA sub-subfamily.

It localises to the cell inner membrane. The enzyme catalyses 2 a 1,2-diacyl-sn-glycero-3-phospho-(1'-sn-glycerol) = a cardiolipin + glycerol. In terms of biological role, catalyzes the reversible phosphatidyl group transfer from one phosphatidylglycerol molecule to another to form cardiolipin (CL) (diphosphatidylglycerol) and glycerol. In Klebsiella pneumoniae (strain 342), this protein is Cardiolipin synthase A.